The primary structure comprises 241 residues: U2 small nuclear ribonucleoprotein B'' (241 aa).

An RRM 1 domain is found at 12-91 (QTLYVNNLYE…RPMKIQYCKS (80 aa)). Positions 99-126 (LDGTYMEKKREREENDKKGSNKKQDRKS) are enriched in basic and acidic residues. Positions 99–169 (LDGTYMEKKR…PRDDPPNKTL (71 aa)) are disordered. Residues 129-152 (QQQQQQKRPGAPTSTTSTTSPTTS) show a composition bias toward low complexity. The region spanning 167-241 (KTLFVENLPD…KPMVVSFAAQ (75 aa)) is the RRM 2 domain.

The protein belongs to the RRM U1 A/B'' family. As to quaternary structure, identified in the spliceosome B complex. Identified in the spliceosome C complex.

The protein localises to the nucleus. Its function is as follows. Involved in pre-mRNA splicing as component of the spliceosome. Associated with sn-RNP U2, where it contributes to the binding of stem loop IV of U2 snRNA. The sequence is that of U2 small nuclear ribonucleoprotein B'' (snrpb2) from Dictyostelium discoideum (Social amoeba).